Consider the following 202-residue polypeptide: Translation initiation factor IF-3 (202 aa).

This sequence belongs to the IF-3 family. As to quaternary structure, monomer.

The protein resides in the cytoplasm. Its function is as follows. IF-3 binds to the 30S ribosomal subunit and shifts the equilibrium between 70S ribosomes and their 50S and 30S subunits in favor of the free subunits, thus enhancing the availability of 30S subunits on which protein synthesis initiation begins. This Prochlorococcus marinus (strain NATL2A) protein is Translation initiation factor IF-3.